An 820-amino-acid chain; its full sequence is Sodium/hydrogen exchanger 1 (820 aa).

The Extracellular segment spans residues 1–102 (MMLRWSGIWG…FPVLDIDYLH (102 aa)). The tract at residues 44–71 (ASTIRGSEPPRERSIGDVTTAPSEPLHH) is disordered. The helical transmembrane segment at 103–125 (VRTPFEISLWILLACLMKIGFHV) threads the bilayer. The Cytoplasmic portion of the chain corresponds to 126 to 134 (IPTISSIVP). The chain crosses the membrane as a helical span at residues 135-152 (ESCLLIVVGLLVGGLIKG). Topologically, residues 153 to 162 (VGETPPFLQS) are extracellular. A helical membrane pass occupies residues 163–180 (DVFFLFLLPPIILDAGYF). Topologically, residues 181-190 (LPLRQFTENL) are cytoplasmic. A helical transmembrane segment spans residues 191-219 (GTILIFAVVGTLWNAFFLGGLLYAVCLVG). Over 220–226 (GEQINNI) the chain is Extracellular. The helical transmembrane segment at 227-253 (GLLDTLLFGSIISAVDPVAVLAVFEEI) threads the bilayer. The Cytoplasmic segment spans residues 254–256 (HIN). The chain crosses the membrane as a helical span at residues 257–287 (ELLHILVFGESLLNDAVTVVLYHLFEEFASY). Residues 288-291 (EYVG) are Extracellular-facing. Residues 292–326 (ISDIFLGFLSFFVVSLGGVFVGVVYGVIAAFTSRF) form a helical membrane-spanning segment. Over 327–332 (TSHIRV) the chain is Cytoplasmic. The chain crosses the membrane as a helical span at residues 333-345 (IEPLFVFLYSYMA). Over 346 to 354 (YLSAELFHL) the chain is Extracellular. Residues 355 to 375 (SGIMALIASGVVMRPYVEANI) traverse the membrane as a helical segment. The Cytoplasmic segment spans residues 376 to 377 (SH). Residues 378 to 408 (KSHTTIKYFLKMWSSVSETLIFIFLGVSTVA) form a helical membrane-spanning segment. The Extracellular portion of the chain corresponds to 409–414 (GSHQWN). A helical membrane pass occupies residues 415–442 (WTFVISTLLFCLIARVLGVLVLTWFINK). At 443–448 (FRIVKL) the chain is on the cytoplasmic side. Residues 449-473 (TPKDQFIIAYGGLRGAIAFSLGYLL) form a helical membrane-spanning segment. Over 474-479 (DKKHFP) the chain is Extracellular. Residues 480-509 (MCDLFLTAIITVIFFTVFVQGMTIRPLVDL) form a helical membrane-spanning segment. The interaction with TESC stretch occupies residues 505–571 (PLVDLLAVKK…VKKCLIAGER (67 aa)). Residues 510–820 (LAVKKKQETK…EGEPFIPKGQ (311 aa)) are Cytoplasmic-facing. The PI(4,5)P2-binding region stretch occupies residues 513–520 (KKKQETKR). The interval 519-549 (KRSINEEIHTQFLDHLLTGIEDICGHYGHHH) is interaction with CHP2. The segment at 544 to 549 (HYGHHH) is confers pH-dependent PI(4,5)P2 binding. The PI(4,5)P2-binding region stretch occupies residues 556–564 (RFNKKYVKK). Residues Ser603 and Ser606 each carry the phosphoserine modification. Position 607 is a phosphothreonine (Thr607). Phosphoserine is present on residues Ser609 and Ser652. The segment at 637–820 (KILRSNLQKT…EGEPFIPKGQ (184 aa)) is interaction with TESC. The interval 637–820 (KILRSNLQKT…EGEPFIPKGQ (184 aa)) is interaction with CALM1. Residues 688 to 691 (LTVP) form an interaction with PPP3CA region. Phosphoserine is present on residues Ser697, Ser701, and Ser707. Positions 719-724 (PVITID) are interaction with PPP3CA. Phosphoserine is present on residues Ser727, Ser730, and Ser733. The interval 747 to 820 (GLKRGPRTTP…EGEPFIPKGQ (74 aa)) is disordered. A phosphothreonine mark is found at Thr755 and Thr784. Phosphoserine is present on residues Ser790 and Ser801.

Belongs to the monovalent cation:proton antiporter 1 (CPA1) transporter (TC 2.A.36) family. In terms of assembly, homodimer; dimerization is crucial for its function. Oligomer. Interacts with CALM1 in a calcium-dependent manner. Interacts with TESC. Interacts (via residues 504-563) with CHP1. The interaction with CHP1 occurs at the plasma membrane in a calcium-dependent manner. Interacts with CHP2. The interaction with CHP2 occurs in a calcium-dependent manner. Interacts with EZR; regulates the cytoskeletal interactions of SLC9A1 and promotes stress fiber formation. N-glycosylated and O-glycosylated in the N-terminal region. Post-translationally, ubiquitinated, leading to its degradation by the proteasome. Ubiquitination is reduced by CHP1. In terms of processing, palmitoylated; may play a major role in SLC9A1 regulation. Phosphorylation at Thr-784 increases SLC9A1 activity; specifically dephosphorylated by PPP3CA. Specifically dephosphorylated at Thr-784 by PPP3CA that negatively regulates SLC9A1 activity. Phosphorylation at Ser-652 by AKT1 reduces SLC9A1 binding to CALM1. As to expression, widely expressed.

The protein localises to the cell membrane. The protein resides in the basolateral cell membrane. The catalysed reaction is Na(+)(in) + H(+)(out) = Na(+)(out) + H(+)(in). The enzyme catalyses Li(+)(out) + H(+)(in) = Li(+)(in) + H(+)(out). It carries out the reaction Li(+)(in) + Na(+)(out) = Li(+)(out) + Na(+)(in). Its activity is regulated as follows. Activated at acidic pHs. Inhibited by cariporide and eniporide. Inhibited by amiloride and 5-amino-substituted derivatives. Phosphatidylinositol 4,5-bisphosphate (PI(4,5)P2) bind and activates SLC9A1 transporter activity. In terms of biological role, electroneutral Na(+) /H(+) antiporter that extrudes Na(+) in exchange for external protons driven by the inward sodium ion chemical gradient, protecting cells from acidification that occurs from metabolism. Exchanges intracellular H(+) ions for extracellular Na(+) in 1:1 stoichiometry. Plays a key role in maintening intracellular pH neutral and cell volume, and thus is important for cell growth, proliferation, migration and survival. In addition, can transport lithium Li(+) and also functions as a Na(+)/Li(+) antiporter. SLC9A1 also functions in membrane anchoring and organization of scaffolding complexes that coordinate signaling inputs. In Rattus norvegicus (Rat), this protein is Sodium/hydrogen exchanger 1 (Slc9a1).